The sequence spans 461 residues: Methylthioribose transporter (461 aa).

12 helical membrane passes run 33-53 (LLGI…TVAA), 56-76 (AGPA…LAAF), 102-122 (LLAF…LSAV), 152-172 (MAGA…TAIV), 185-205 (VIVL…IGYV), 213-233 (FMPF…FAYL), 254-274 (VGII…SLVL), 301-321 (VAGI…LALL), 355-375 (TWLT…GTLA), 376-396 (HLVN…VIVL), 409-429 (VPFV…FMYS), and 432-452 (GVTW…YFLY).

It belongs to the amino acid-polyamine-organocation (APC) superfamily.

Its subcellular location is the cell membrane. In terms of biological role, involved in import of methylthioribose (MTR) into the cell. This chain is Methylthioribose transporter, found in Bacillus subtilis (strain 168).